The sequence spans 313 residues: D-apiose import binding protein (313 aa).

The signal sequence occupies residues 1–26 (MKLTRRLTLAAFASALALGTAMPAFA). Residues Asn39, 115–116 (DR), 162–164 (DTN), Arg168, Asn218, Asp243, and Gln263 contribute to the D-apiofuranose site.

This sequence belongs to the bacterial solute-binding protein 2 family.

It is found in the periplasm. Its function is as follows. Part of an ABC transporter complex involved in D-apiose import. Binds D-apiose, D-ribose and D-ribulose. The protein is D-apiose import binding protein of Rhizobium etli (strain ATCC 51251 / DSM 11541 / JCM 21823 / NBRC 15573 / CFN 42).